The primary structure comprises 394 residues: Maltose permease (394 aa).

At 1-11 the chain is on the cytoplasmic side; sequence MGAAFKWGAAA. A helical transmembrane segment spans residues 12–38; the sequence is RKTVFPLFYFLIFFAFGALFPLLSVYL. The Extracellular segment spans residues 39–45; sequence QEEARLS. Residues 46 to 74 form a helical membrane-spanning segment; the sequence is GAAIGWIMSLPPIVTMAAQPLWGTAADYT. Over 75–78 the chain is Cytoplasmic; it reads RKPV. Residues 79-104 form a helical membrane-spanning segment; it reads GLLLAALVLAALFGVMYALAGSYRLF. Over 105 to 108 the chain is Extracellular; the sequence is VVLT. Residues 109-126 traverse the membrane as a helical segment; that stretch reads VLLSAMQSAIVPLSDSLA. Residues 127–137 are Cytoplasmic-facing; the sequence is LRHVHEQGGNY. A helical transmembrane segment spans residues 138–160; the sequence is GAIRLWGSLGFAMAVLAVGWLSD. The Extracellular portion of the chain corresponds to 161–163; the sequence is HIA. A helical transmembrane segment spans residues 164–183; it reads FAVIFYAFSLALLTAAALAT. Residues 184–213 are Cytoplasmic-facing; it reads RLPRYPMGAPGALTRQDVRGLLASRPFRLL. A helical transmembrane segment spans residues 214–233; it reads LVATFLLFGPILANNSYFGL. Topologically, residues 234–237 are extracellular; it reads LIHE. A helical transmembrane segment spans residues 238–262; sequence LGGTLTGIGLAFLFAAGSEAPFMKA. The Cytoplasmic segment spans residues 263–272; sequence ADRLIGRFGM. A helical transmembrane segment spans residues 273–292; that stretch reads VRLLLLAALISAARWLAYAA. The Extracellular segment spans residues 293–295; that stretch reads DPP. Residues 296-318 traverse the membrane as a helical segment; the sequence is LWFVYMTTVVQGCSVGLAIPTAL. The Cytoplasmic portion of the chain corresponds to 319–330; sequence QYARRLAPERVQ. The helical transmembrane segment at 331-358 threads the bilayer; it reads STAVALYSAVGNGLGAWFCTLVGGYLLE. The Extracellular portion of the chain corresponds to 359 to 361; that stretch reads RWQ. Residues 362–382 form a helical membrane-spanning segment; the sequence is IGAVYLFFSICTIVGVLVLLL. The Cytoplasmic segment spans residues 383–394; sequence LAKRERTAGEEK.

This sequence belongs to the major facilitator superfamily.

Its subcellular location is the cell membrane. High affinity transport of maltose. The chain is Maltose permease (malA) from Geobacillus stearothermophilus (Bacillus stearothermophilus).